The following is a 1255-amino-acid chain: Pre-mRNA-splicing factor ATP-dependent RNA helicase DEAH7 (1255 aa).

A disordered region spans residues 1-316 (MGVDPFKTTE…SDEDRSQGAE (316 aa)). Basic and acidic residues predominate over residues 13 to 60 (EADKETNGGVPVKDKLTFKAPERKSRLGLDARAIEKKDNAKTEGEFKV). Polar residues predominate over residues 109–137 (AQESTVTTENAGTSDISITPRTLSCTSSY). 2 short sequence motifs (nuclear localization signal) span residues 144 to 153 (RHREEHRRDR) and 172 to 191 (RRRE…KRRR). The span at 144–219 (RHREEHRRDR…EWERSPHGDR (76 aa)) shows a compositional bias: basic and acidic residues. Low complexity-rich tracts occupy residues 220 to 240 (GSSY…AASP) and 271 to 290 (PIRA…GGRS). Residues 297–316 (REGDLTNEGHSDEDRSQGAE) show a composition bias toward basic and acidic residues. A Helicase ATP-binding domain is found at 568-731 (LQVIRENQVI…FGSVPIFNIP (164 aa)). 581–588 (GETGSGKT) is an ATP binding site. The DEAH box signature appears at 678–681 (DEAH). A Helicase C-terminal domain is found at 753–933 (AVKQAMTIHI…NVVLLLKSLK (181 aa)). The segment covering 1190–1224 (LEHKKKQKEEKSGMEEEMEKLRRDQVESELRSKER) has biased composition (basic and acidic residues). The segment at 1190-1255 (LEHKKKQKEE…TFLRPKKLGL (66 aa)) is disordered.

Belongs to the DEAD box helicase family. DEAH subfamily. PRP16 sub-subfamily. As to quaternary structure, interacts with the Phytophthora PSR1 protein.

Its subcellular location is the nucleus. The enzyme catalyses ATP + H2O = ADP + phosphate + H(+). Involved in pre-mRNA splicing by mediating structural transitions of the spliceosome during the catalytic step. Facilitates expression of genes involved in auxin-mediated development including male-gametophyte transmission, apical-basal patterning of embryonic and gynoecium development, stamen development, phyllotactic flower positioning, and vascular development. Also involved in root-meristem maintenance and planar polarity of root-hair positioning. Acts as a component of RNA silencing that regulates distinct classes of endogenous small RNAs. Functions as a positive regulator of plant immunity. This is Pre-mRNA-splicing factor ATP-dependent RNA helicase DEAH7 from Arabidopsis thaliana (Mouse-ear cress).